Here is a 120-residue protein sequence, read N- to C-terminus: NAD(P)H-quinone oxidoreductase subunit 3, chloroplastic (120 aa).

Transmembrane regions (helical) follow at residues 9 to 29 (IFWA…LISG), 64 to 84 (MFAL…PWAM), and 88 to 108 (VLGL…IVGS).

It belongs to the complex I subunit 3 family. NDH is composed of at least 16 different subunits, 5 of which are encoded in the nucleus.

It localises to the plastid. It is found in the chloroplast thylakoid membrane. The enzyme catalyses a plastoquinone + NADH + (n+1) H(+)(in) = a plastoquinol + NAD(+) + n H(+)(out). It catalyses the reaction a plastoquinone + NADPH + (n+1) H(+)(in) = a plastoquinol + NADP(+) + n H(+)(out). NDH shuttles electrons from NAD(P)H:plastoquinone, via FMN and iron-sulfur (Fe-S) centers, to quinones in the photosynthetic chain and possibly in a chloroplast respiratory chain. The immediate electron acceptor for the enzyme in this species is believed to be plastoquinone. Couples the redox reaction to proton translocation, and thus conserves the redox energy in a proton gradient. In Manihot esculenta (Cassava), this protein is NAD(P)H-quinone oxidoreductase subunit 3, chloroplastic.